We begin with the raw amino-acid sequence, 735 residues long: 2-5A-dependent ribonuclease (735 aa).

A disordered region spans residues 1-21 (METPDYNTPQGGTPSAGSQRT). ANK repeat units follow at residues 24–53 (EDDS…DANA), 58–87 (WGWT…DPHR), 91–120 (NGAT…DVNE), 124–153 (NGFT…NVNL), 167–197 (GGAT…EVDA), 201–234 (MGRN…DVNV), 238–268 (RGKT…NIDA), 272–301 (EGKT…DKCD), and 303–328 (LVWI…NPDT). Residues 26–51 (DSSLIKAVQKGDVVRVQQLLEKGADA) are binding to TMEV Leader protein. 2-5A binding (P-loop) regions lie at residues 229–242 (GADV…GKTP) and 253–275 (GLVQ…EGKT). In terms of domain architecture, Protein kinase spans 364-584 (IHDDYKIAGT…LVDLLGHPFF (221 aa)). The C6-type zinc-finger motif lies at 401–436 (CKEVSCLRDCGDHSNLVAFYGREDDKGCLYVCVSLC). Residues 587-722 (WENRYRTLRN…KHFPQPPPRL (136 aa)) form the KEN domain. The segment at 714–735 (HFPQPPPRLSVPEAVGPGGIQS) is disordered.

The protein belongs to the protein kinase superfamily. As to quaternary structure, (Microbial infection) Interacts (via N-terminus) with TMEV leader protein; this interaction prevents RNASEL activation by its substrate 2'-5' oligoadenylates. In terms of assembly, monomer (inactive form) or homodimer. Interacts with ABCE1; this interaction inhibits the RNASEL. It depends on Mn(2+) as a cofactor. Requires Mg(2+) as cofactor. In terms of tissue distribution, expressed in spleen, thymus, lung, testis, kidney, liver and heart.

It localises to the cytoplasm. Its subcellular location is the mitochondrion. Its activity is regulated as follows. After binding to 2-5A (5'-phosphorylated 2',5'-linked oligoadenylates) the homodimerization and subsequent activation occurs. Inhibited by RNASEL inhibitor ABCE1/RLI, a cytoplasmic member of the ATP-binding cassette (ABC) transporter family. Functionally, endoribonuclease that functions in the interferon (IFN) antiviral response. In INF treated and virus infected cells, RNASEL probably mediates its antiviral effects through a combination of direct cleavage of single-stranded viral RNAs, inhibition of protein synthesis through the degradation of rRNA, induction of apoptosis, and induction of other antiviral genes. RNASEL mediated apoptosis is the result of a JNK-dependent stress-response pathway leading to cytochrome c release from mitochondria and caspase-dependent apoptosis. Therefore, activation of RNASEL could lead to elimination of virus infected cells under some circumstances. In the crosstalk between autophagy and apoptosis proposed to induce autophagy as an early stress response to small double-stranded RNA and at later stages of prolonged stress to activate caspase-dependent proteolytic cleavage of BECN1 to terminate autophagy and promote apoptosis. Might play a central role in the regulation of mRNA turnover. Cleaves 3' of UpNp dimers, with preference for UU and UA sequences, to sets of discrete products ranging from between 4 and 22 nucleotides in length. The polypeptide is 2-5A-dependent ribonuclease (Rnasel) (Mus musculus (Mouse)).